The primary structure comprises 298 residues: Zinc import ATP-binding protein ZnuC (298 aa).

The region spanning 17–232 (IELRNAGVYR…PEYVRLFGSR (216 aa)) is the ABC transporter domain. 49 to 56 (GPNGAGKS) serves as a coordination point for ATP. Positions 273 to 298 (RGHCHVEDGHHHDHEHHHHEGGQPRA) are disordered. Over residues 276 to 298 (CHVEDGHHHDHEHHHHEGGQPRA) the composition is skewed to basic and acidic residues.

The protein belongs to the ABC transporter superfamily. Zinc importer (TC 3.A.1.15.5) family. As to quaternary structure, the complex is composed of two ATP-binding proteins (ZnuC), two transmembrane proteins (ZnuB) and a solute-binding protein (ZnuA).

It localises to the cell inner membrane. It carries out the reaction Zn(2+)(out) + ATP(in) + H2O(in) = Zn(2+)(in) + ADP(in) + phosphate(in) + H(+)(in). In terms of biological role, part of the ABC transporter complex ZnuABC involved in zinc import. Responsible for energy coupling to the transport system. The polypeptide is Zinc import ATP-binding protein ZnuC (Brucella suis biovar 1 (strain 1330)).